Here is a 163-residue protein sequence, read N- to C-terminus: Ribosome maturation factor RimP (163 aa).

This sequence belongs to the RimP family.

The protein resides in the cytoplasm. Its function is as follows. Required for maturation of 30S ribosomal subunits. The sequence is that of Ribosome maturation factor RimP from Streptococcus mutans serotype c (strain ATCC 700610 / UA159).